Reading from the N-terminus, the 546-residue chain is Chaperonin GroEL (546 aa).

Residues 30–33, K51, 87–91, G415, and D496 contribute to the ATP site; these read TLGP and DGTTT. A disordered region spans residues 526-546; that stretch reads PQKDAPAGGGMPDMGGMGGMM. The span at 532 to 546 shows a compositional bias: gly residues; it reads AGGGMPDMGGMGGMM.

The protein belongs to the chaperonin (HSP60) family. In terms of assembly, forms a cylinder of 14 subunits composed of two heptameric rings stacked back-to-back. Interacts with the co-chaperonin GroES.

It localises to the cytoplasm. It carries out the reaction ATP + H2O + a folded polypeptide = ADP + phosphate + an unfolded polypeptide.. Together with its co-chaperonin GroES, plays an essential role in assisting protein folding. The GroEL-GroES system forms a nano-cage that allows encapsulation of the non-native substrate proteins and provides a physical environment optimized to promote and accelerate protein folding. In Ruegeria pomeroyi (strain ATCC 700808 / DSM 15171 / DSS-3) (Silicibacter pomeroyi), this protein is Chaperonin GroEL.